The chain runs to 187 residues: MLPVNDLRKGDAIILDGETYLVVDAHFHRAQQRKANVKTKLKNMLKGNMIEKTFSSTESVEEADLSYKKAQYLYEEGDSYVFMILDNYEQVHVSADILGDSKYYLLDSCEVDLQYINDEVTAVRFPIHVILEVTYTEPGFKGDTTGSTLKPAKLETGIEVNVPLFINIGDKIKVDTRDDSYVERVNK.

It belongs to the elongation factor P family.

The protein localises to the cytoplasm. Its pathway is protein biosynthesis; polypeptide chain elongation. Involved in peptide bond synthesis. Stimulates efficient translation and peptide-bond synthesis on native or reconstituted 70S ribosomes in vitro. Probably functions indirectly by altering the affinity of the ribosome for aminoacyl-tRNA, thus increasing their reactivity as acceptors for peptidyl transferase. The polypeptide is Elongation factor P (Brachyspira hyodysenteriae (strain ATCC 49526 / WA1)).